The following is a 452-amino-acid chain: tRNA modification GTPase MnmE (452 aa).

(6S)-5-formyl-5,6,7,8-tetrahydrofolate is bound by residues Arg-25, Glu-81, and Lys-120. Residues 216-375 (GITVVIAGEP…LKNHLKNTAG (160 aa)) enclose the TrmE-type G domain. Asn-226 is a binding site for K(+). GTP-binding positions include 226 to 231 (NVGKSS), 245 to 251 (TDIAGTT), and 270 to 273 (DTAG). Ser-230 serves as a coordination point for Mg(2+). Residues Thr-245, Ile-247, and Thr-250 each coordinate K(+). Thr-251 provides a ligand contact to Mg(2+). Lys-452 serves as a coordination point for (6S)-5-formyl-5,6,7,8-tetrahydrofolate.

It belongs to the TRAFAC class TrmE-Era-EngA-EngB-Septin-like GTPase superfamily. TrmE GTPase family. In terms of assembly, homodimer. Heterotetramer of two MnmE and two MnmG subunits. K(+) serves as cofactor.

It localises to the cytoplasm. Its function is as follows. Exhibits a very high intrinsic GTPase hydrolysis rate. Involved in the addition of a carboxymethylaminomethyl (cmnm) group at the wobble position (U34) of certain tRNAs, forming tRNA-cmnm(5)s(2)U34. The chain is tRNA modification GTPase MnmE from Coxiella burnetii (strain Dugway 5J108-111).